We begin with the raw amino-acid sequence, 105 residues long: Small ribosomal subunit protein uS10 (105 aa).

The protein belongs to the universal ribosomal protein uS10 family. As to quaternary structure, part of the 30S ribosomal subunit.

Its function is as follows. Involved in the binding of tRNA to the ribosomes. The polypeptide is Small ribosomal subunit protein uS10 (Arthrospira platensis (Spirulina platensis)).